The chain runs to 259 residues: Thiazole synthase (259 aa).

Residue Lys99 is the Schiff-base intermediate with DXP of the active site. 1-deoxy-D-xylulose 5-phosphate contacts are provided by residues Gly160, Ala186–Gly187, and Asn208–Thr209.

The protein belongs to the ThiG family. In terms of assembly, homotetramer. Forms heterodimers with either ThiH or ThiS.

Its subcellular location is the cytoplasm. The enzyme catalyses [ThiS sulfur-carrier protein]-C-terminal-Gly-aminoethanethioate + 2-iminoacetate + 1-deoxy-D-xylulose 5-phosphate = [ThiS sulfur-carrier protein]-C-terminal Gly-Gly + 2-[(2R,5Z)-2-carboxy-4-methylthiazol-5(2H)-ylidene]ethyl phosphate + 2 H2O + H(+). It functions in the pathway cofactor biosynthesis; thiamine diphosphate biosynthesis. Its function is as follows. Catalyzes the rearrangement of 1-deoxy-D-xylulose 5-phosphate (DXP) to produce the thiazole phosphate moiety of thiamine. Sulfur is provided by the thiocarboxylate moiety of the carrier protein ThiS. In vitro, sulfur can be provided by H(2)S. In Porphyromonas gingivalis (strain ATCC BAA-308 / W83), this protein is Thiazole synthase.